Reading from the N-terminus, the 487-residue chain is MEYEVIIGLEVHVQLNTNSKIFSTATNEFGGSPNTHISPLCVALPGTLPVLNEVVLEKAVRAGVALGCEITKFTKFDRKNYFYPDLPKGYQISQFDKPYATKGGIHVLLKGEKEEKFIPLTRIHMEEDAGKLIHSHDPSINRSYVDYNRAGTPLIEIVSEPDLRSSDEAYVYLNELKTILRYIQVSDCNMEEGSLRCDANVSIRPKGEKGFRTRVEIKNLNSFKAVKQAIDYEVEWQKDVYSRGESFKQMTKLWDATLLKTIPMRSKEMSHDYRYFPEPDLPTIQISDSFIEDIRKTLPELPRQKKERYKTELGLPEYDAEVLTSEREIAEYFEEALVIAGDAKKTSNWVKDEILGIVNKENISIQEFAIDPVRIGKLVKLINSGEITGKIAKTIFEDMLTTKDQPETIVEKNGLKVVRDDKALEEIVIRVIESQPESVEGWKNGKDRVLGAIVGGVMKETKGKADPKLVNELILAKLGPLGEKKKV.

It belongs to the GatB/GatE family. GatB subfamily. Heterotrimer of A, B and C subunits.

The catalysed reaction is L-glutamyl-tRNA(Gln) + L-glutamine + ATP + H2O = L-glutaminyl-tRNA(Gln) + L-glutamate + ADP + phosphate + H(+). The enzyme catalyses L-aspartyl-tRNA(Asn) + L-glutamine + ATP + H2O = L-asparaginyl-tRNA(Asn) + L-glutamate + ADP + phosphate + 2 H(+). Its function is as follows. Allows the formation of correctly charged Asn-tRNA(Asn) or Gln-tRNA(Gln) through the transamidation of misacylated Asp-tRNA(Asn) or Glu-tRNA(Gln) in organisms which lack either or both of asparaginyl-tRNA or glutaminyl-tRNA synthetases. The reaction takes place in the presence of glutamine and ATP through an activated phospho-Asp-tRNA(Asn) or phospho-Glu-tRNA(Gln). This chain is Aspartyl/glutamyl-tRNA(Asn/Gln) amidotransferase subunit B, found in Leptospira biflexa serovar Patoc (strain Patoc 1 / Ames).